Consider the following 283-residue polypeptide: 1D-myo-inositol 2-acetamido-2-deoxy-alpha-D-glucopyranoside deacetylase (283 aa).

Zn(2+)-binding residues include His-15, Asp-18, and His-150.

This sequence belongs to the MshB deacetylase family. Requires Zn(2+) as cofactor.

The enzyme catalyses 1D-myo-inositol 2-acetamido-2-deoxy-alpha-D-glucopyranoside + H2O = 1D-myo-inositol 2-amino-2-deoxy-alpha-D-glucopyranoside + acetate. Its function is as follows. Catalyzes the deacetylation of 1D-myo-inositol 2-acetamido-2-deoxy-alpha-D-glucopyranoside (GlcNAc-Ins) in the mycothiol biosynthesis pathway. The polypeptide is 1D-myo-inositol 2-acetamido-2-deoxy-alpha-D-glucopyranoside deacetylase (Actinosynnema mirum (strain ATCC 29888 / DSM 43827 / JCM 3225 / NBRC 14064 / NCIMB 13271 / NRRL B-12336 / IMRU 3971 / 101)).